Here is a 188-residue protein sequence, read N- to C-terminus: Ribosomal RNA small subunit methyltransferase G (188 aa).

S-adenosyl-L-methionine is bound by residues G69, F74, 119–120 (VQ), and R134.

This sequence belongs to the methyltransferase superfamily. RNA methyltransferase RsmG family.

It is found in the cytoplasm. It catalyses the reaction guanosine(527) in 16S rRNA + S-adenosyl-L-methionine = N(7)-methylguanosine(527) in 16S rRNA + S-adenosyl-L-homocysteine. In terms of biological role, specifically methylates the N7 position of guanine in position 527 of 16S rRNA. The chain is Ribosomal RNA small subunit methyltransferase G from Campylobacter jejuni (strain RM1221).